The following is a 428-amino-acid chain: Transcription factor bHLH91 (428 aa).

The bHLH domain maps to 210–259 (KRKNKPFTTERERRCHLNERYEALKLLIPSPSKGDRASILQDGIDYINEL). Residues 278-320 (RHKNNEVDDNNNNKNLDDHGNEDDDDDDENMEKKPESDVIDQC) are disordered. Positions 297–307 (GNEDDDDDDEN) are enriched in acidic residues.

Homodimer. As to expression, flowers.

The protein resides in the nucleus. The chain is Transcription factor bHLH91 (BHLH91) from Arabidopsis thaliana (Mouse-ear cress).